Consider the following 104-residue polypeptide: Large ribosomal subunit protein eL30 (104 aa).

It belongs to the eukaryotic ribosomal protein eL30 family.

The sequence is that of Large ribosomal subunit protein eL30 (RPL30) from Tetrahymena thermophila (strain SB210).